Consider the following 327-residue polypeptide: ATPase ASNA1 homolog (327 aa).

ATP is bound at residue 26–33; that stretch reads KGGVGKTT. The active site involves D57. ATP contacts are provided by E238 and N265. Zn(2+) contacts are provided by C274 and C277.

The protein belongs to the arsA ATPase family. Homodimer.

It is found in the cytoplasm. It localises to the endoplasmic reticulum. In terms of biological role, ATPase required for the post-translational delivery of tail-anchored (TA) proteins to the endoplasmic reticulum. Recognizes and selectively binds the transmembrane domain of TA proteins in the cytosol. This complex then targets to the endoplasmic reticulum by membrane-bound receptors, where the tail-anchored protein is released for insertion. This process is regulated by ATP binding and hydrolysis. ATP binding drives the homodimer towards the closed dimer state, facilitating recognition of newly synthesized TA membrane proteins. ATP hydrolysis is required for insertion. Subsequently, the homodimer reverts towards the open dimer state, lowering its affinity for the membrane-bound receptor, and returning it to the cytosol to initiate a new round of targeting. The chain is ATPase ASNA1 homolog from Entamoeba histolytica (strain ATCC 30459 / HM-1:IMSS / ABRM).